A 215-amino-acid polypeptide reads, in one-letter code: Peroxiredoxin (215 aa).

The region spanning 6-161 is the Thioredoxin domain; it reads PLIGEEFPRV…ILRAVKALQT (156 aa). C48 acts as the Cysteine sulfenic acid (-SOH) intermediate in catalysis. R124 provides a ligand contact to substrate. C205 and C211 are oxidised to a cystine.

Belongs to the peroxiredoxin family. Prx6 subfamily. As to quaternary structure, homodecamer. Pentamer of dimers that assemble into a ring structure.

It localises to the cytoplasm. The enzyme catalyses a hydroperoxide + [thioredoxin]-dithiol = an alcohol + [thioredoxin]-disulfide + H2O. Functionally, thiol-specific peroxidase that catalyzes the reduction of hydrogen peroxide and organic hydroperoxides to water and alcohols, respectively. Plays a role in cell protection against oxidative stress by detoxifying peroxides. The protein is Peroxiredoxin of Thermotoga maritima (strain ATCC 43589 / DSM 3109 / JCM 10099 / NBRC 100826 / MSB8).